A 193-amino-acid chain; its full sequence is Ubiquitin-conjugating enzyme E2 E1 (193 aa).

Residues 1-45 are disordered; sequence MSDDDSRASTSSSSSSSSNQQTEKETNTPKKKESKVSMSKNSKLL. Residue S2 is modified to N-acetylserine. Positions 8–18 are enriched in low complexity; that stretch reads ASTSSSSSSSS. Residues 22–35 are compositionally biased toward basic and acidic residues; it reads TEKETNTPKKKESK. A compositionally biased stretch (polar residues) spans 36 to 45; it reads VSMSKNSKLL. The region spanning 47 to 193 is the UBC core domain; that stretch reads TSAKRIQKEL…ARQWTKRYAT (147 aa). C131 serves as the catalytic Glycyl thioester intermediate. K136 participates in a covalent cross-link: Glycyl lysine isopeptide (Lys-Gly) (interchain with G-Cter in ISG15).

Belongs to the ubiquitin-conjugating enzyme family. Interacts with RNF14. Post-translationally, ISGylation suppresses ubiquitin E2 enzyme activity. Autoubiquitinated in vitro.

The protein localises to the nucleus. It carries out the reaction S-ubiquitinyl-[E1 ubiquitin-activating enzyme]-L-cysteine + [E2 ubiquitin-conjugating enzyme]-L-cysteine = [E1 ubiquitin-activating enzyme]-L-cysteine + S-ubiquitinyl-[E2 ubiquitin-conjugating enzyme]-L-cysteine.. The catalysed reaction is S-ubiquitinyl-[E1 ubiquitin-activating enzyme]-L-cysteine + [acceptor protein]-L-lysine = [E1 ubiquitin-activating enzyme]-L-cysteine + N(6)-monoubiquitinyl-[acceptor protein]-L-lysine.. It participates in protein modification; protein ubiquitination. Functionally, accepts ubiquitin from the E1 complex and catalyzes its covalent attachment to other proteins. Catalyzes the covalent attachment of ISG15 to other proteins. Mediates the selective degradation of short-lived and abnormal proteins. In vitro also catalyzes 'Lys-48'-linked polyubiquitination. Catalyzes monoubiquitination of other proteins in both an E3-dependent and E3-independent manner. The chain is Ubiquitin-conjugating enzyme E2 E1 from Homo sapiens (Human).